The sequence spans 472 residues: MAFQQGEAAPVSTQSSLSFTQGFLLGQLSVVLLIGAFIKFFIFGEAPPPPSRGLRASTHRRSNSIFSQDAPPPRSLREKPSTSNVLRPVPSSATNTRSILRKTYYSAIPPNPSSKHRIHHSSHQPESLDWFNVLIAQTIAQYRQTAYLLKDSPTSSILHSLTAALNNPEKKPSFIDKITVTDISLGEEFPIFSNCRIIAVDDPMSDGGRLQALLDVDMSDDNLSIAVETSLVLNYPKPCSAILPVALSISVVRFSGTLCISLVPASTPPLHTPSPMPSPPTAGAQPAAGAQPTDGGDIPPKSSSKSNIAFSFLPDYRLDLSVRSLIGSRSRLQDVPKVAQLVEARVHAWFEERVVEPRVQVVGLPDLWPRMGRTGVRTGDESETGSNTASRPAMSVDMSSPGHLQGDGGNHEEELRFRGLGPRPPLPFDAVSRTSSYQVETGAPRSPSLTRERSLGDDFHMPGSMPEAPGAQ.

Residues 1 to 22 lie on the Lumenal side of the membrane; the sequence is MAFQQGEAAPVSTQSSLSFTQG. Residues 23-43 traverse the membrane as a helical segment; it reads FLLGQLSVVLLIGAFIKFFIF. The Cytoplasmic portion of the chain corresponds to 44–472; the sequence is GEAPPPPSRG…GSMPEAPGAQ (429 aa). 3 disordered regions span residues 51-92, 270-303, and 370-472; these read SRGL…VPSS, LHTP…PKSS, and RMGR…PGAQ. Residues 81 to 92 are compositionally biased toward polar residues; sequence STSNVLRPVPSS. In terms of domain architecture, SMP-LTD spans 124 to 365; it reads QPESLDWFNV…EPRVQVVGLP (242 aa). Positions 270 to 280 are enriched in pro residues; it reads LHTPSPMPSPP. Over residues 281–297 the composition is skewed to low complexity; that stretch reads TAGAQPAAGAQPTDGGD. Residues 450–460 show a composition bias toward basic and acidic residues; sequence TRERSLGDDFH.

The protein belongs to the MMM1 family. Homodimer. Component of the ER-mitochondria encounter structure (ERMES) or MDM complex, composed of mmm1, mdm10, mdm12 and mdm34. A mmm1 homodimer associates with one molecule of mdm12 on each side in a pairwise head-to-tail manner, and the SMP-LTD domains of mmm1 and mdm12 generate a continuous hydrophobic tunnel for phospholipid trafficking.

It localises to the endoplasmic reticulum membrane. Component of the ERMES/MDM complex, which serves as a molecular tether to connect the endoplasmic reticulum (ER) and mitochondria. Components of this complex are involved in the control of mitochondrial shape and protein biogenesis, and function in nonvesicular lipid trafficking between the ER and mitochondria. The mdm12-mmm1 subcomplex functions in the major beta-barrel assembly pathway that is responsible for biogenesis of all outer membrane beta-barrel proteins, and acts in a late step after the SAM complex. The mdm10-mdm12-mmm1 subcomplex further acts in the TOM40-specific pathway after the action of the mdm12-mmm1 complex. Essential for establishing and maintaining the structure of mitochondria and maintenance of mtDNA nucleoids. The polypeptide is Maintenance of mitochondrial morphology protein 1 (Emericella nidulans (strain FGSC A4 / ATCC 38163 / CBS 112.46 / NRRL 194 / M139) (Aspergillus nidulans)).